A 377-amino-acid polypeptide reads, in one-letter code: Cilia- and flagella-associated protein 263 (377 aa).

2 coiled-coil regions span residues 95 to 243 (LTAD…NQEL) and 280 to 354 (LRKE…SLKG).

Belongs to the CFAP263 family. As to quaternary structure, forms a complex with CFAP184; the interaction is required for functional activity in cilia. Interacts with HAP1 and PCM1.

The protein localises to the cytoplasm. It is found in the cytoskeleton. It localises to the microtubule organizing center. Its subcellular location is the centrosome. The protein resides in the centriolar satellite. The protein localises to the cell projection. It is found in the cilium. Functionally, component of centriolar satellites contributing to primary cilium formation. In complex with CFAP263, acts as a regulator of ciliary beating that connects radial spoke 3 (RS3) to the inner dynein arm (IDA) and the nexin-dynein regulatory complex (N-DRC). The complex is positioned parallel to N-DRC and forms a connection between the arch at the base of RS3, the IDA tail and N-DRC. This chain is Cilia- and flagella-associated protein 263, found in Homo sapiens (Human).